Reading from the N-terminus, the 365-residue chain is Hematopoietic SH2 domain-containing protein homolog (365 aa).

The SH2 domain maps to 34-125 (WFHGIISRKA…PYNELLTVAC (92 aa)). Disordered stretches follow at residues 199–278 (QSTD…QQKP) and 335–365 (AEHPISDGIPKSSDRNLPVEYRHPPPFAPGY). The segment covering 257-277 (QQITPNTPNEGRTQQKNQQQK) has biased composition (polar residues).

May be an adapter protein involved in tyrosine kinase signaling. In Danio rerio (Zebrafish), this protein is Hematopoietic SH2 domain-containing protein homolog (hsh2d).